Here is a 199-residue protein sequence, read N- to C-terminus: Pyridoxal 5'-phosphate synthase subunit PdxT (199 aa).

49 to 51 (GES) contributes to the L-glutamine binding site. The Nucleophile role is filled by Cys-81. Residues Arg-110 and 139–140 (IR) contribute to the L-glutamine site. Residues His-175 and Glu-177 each act as charge relay system in the active site.

This sequence belongs to the glutaminase PdxT/SNO family. In terms of assembly, in the presence of PdxS, forms a dodecamer of heterodimers. Only shows activity in the heterodimer.

The enzyme catalyses aldehydo-D-ribose 5-phosphate + D-glyceraldehyde 3-phosphate + L-glutamine = pyridoxal 5'-phosphate + L-glutamate + phosphate + 3 H2O + H(+). It carries out the reaction L-glutamine + H2O = L-glutamate + NH4(+). The protein operates within cofactor biosynthesis; pyridoxal 5'-phosphate biosynthesis. Its function is as follows. Catalyzes the hydrolysis of glutamine to glutamate and ammonia as part of the biosynthesis of pyridoxal 5'-phosphate. The resulting ammonia molecule is channeled to the active site of PdxS. The chain is Pyridoxal 5'-phosphate synthase subunit PdxT from Frankia casuarinae (strain DSM 45818 / CECT 9043 / HFP020203 / CcI3).